A 210-amino-acid polypeptide reads, in one-letter code: Germin-like protein subfamily 3 member 4 (210 aa).

An N-terminal signal peptide occupies residues 1-18 (MKFFVVIVFCAIFLSVSG). An intrachain disulfide couples C27 to C44. The 133-residue stretch at 58–190 (TKLTEAGDTD…VFGIDQEHIK (133 aa)) folds into the Cupin type-1 domain. A glycan (N-linked (GlcNAc...) asparagine) is linked at N73. Residues H106, H108, E113, and H152 each coordinate Mn(2+).

This sequence belongs to the germin family. As to quaternary structure, oligomer (believed to be a pentamer but probably hexamer).

The protein resides in the secreted. It localises to the extracellular space. Its subcellular location is the apoplast. May play a role in plant defense. Probably has no oxalate oxidase activity even if the active site is conserved. The polypeptide is Germin-like protein subfamily 3 member 4 (Arabidopsis thaliana (Mouse-ear cress)).